The following is a 567-amino-acid chain: MGRGLLRGLWPLHIVLWTRIASTIPPHVPKSVNSDVMASDNGGAVKLPQLCKFCDVRLSTCDNQKSCMSNCSITAICEKPHEVCVAVWRKNDKNITLETVCHDPKLTYHGFTLEDAASPKCVMKEKKRAGETFFMCACNMEECNDYIIFSEEYTTSSPDLLLVIIQVTGVSLLPPLGIAIAVIIIFYCYRVHRQQKLSPSWESSKPRKLMDFSDNCAIILEDDRSDISSTCANNINHNTELLPIELDTLVGKGRFAEVYKAKLKQNTSEQFETVAVKIFPYEEYSSWKTEKDIFSDINLKHENILQFLTAEERKTELGKQYWLITAFHAKGNLQEYLTRHVISWEDLRKLGSSLARGIAHLHSDHTPCGRPKMPIVHRDLKSSNILVKNDLTCCLCDFGLSLRLDPTLSVDDLANSGQVGTARYMAPEVLESRMNLENVESFKQTDVYSMALVLWEMTSRCNAVGEVKDYEPPFGSKVREHPCVESMKDSVLRDRGRPEIPSFWLNHQGIQIVCETLTECWDHDPEARLTAQCVAERFSELEHPERLSGRSCSQEKIPEDGSLNTTK.

The N-terminal stretch at 1–23 (MGRGLLRGLWPLHIVLWTRIAST) is a signal peptide. Residues 24–166 (IPPHVPKSVN…SPDLLLVIIQ (143 aa)) are Extracellular-facing. Intrachain disulfides connect Cys-51-Cys-84, Cys-54-Cys-71, Cys-61-Cys-67, Cys-77-Cys-101, Cys-121-Cys-136, and Cys-138-Cys-143. 2 N-linked (GlcNAc...) asparagine glycosylation sites follow: Asn-70 and Asn-94. A helical membrane pass occupies residues 167–187 (VTGVSLLPPLGIAIAVIIIFY). Residues 188 to 567 (CYRVHRQQKL…PEDGSLNTTK (380 aa)) lie on the Cytoplasmic side of the membrane. Residues 244-546 (IELDTLVGKG…RFSELEHPER (303 aa)) form the Protein kinase domain. ATP-binding positions include 250–258 (VGKGRFAEV) and Lys-277. Asp-379 acts as the Proton acceptor in catalysis. A phosphoserine mark is found at Ser-409, Ser-548, and Ser-553. Residues 545 to 567 (ERLSGRSCSQEKIPEDGSLNTTK) form a disordered region.

Belongs to the protein kinase superfamily. TKL Ser/Thr protein kinase family. TGFB receptor subfamily. In terms of assembly, homodimer. Heterohexamer; TGFB1, TGFB2 and TGFB3 homodimeric ligands assemble a functional receptor composed of two TGFBR1 and TGFBR2 heterodimers to form a ligand-receptor heterohexamer. The respective affinity of TGFRB1 and TGFRB2 for the ligands may modulate the kinetics of assembly of the receptor and may explain the different biological activities of TGFB1, TGFB2 and TGFB3. Component of a complex composed of TSC22D1 (via N-terminus), TGFBR1 and TGFBR2; the interaction between TSC22D1 and TGFBR1 is inhibited by SMAD7 and promoted by TGFB1. Interacts with DAXX. Interacts with DYNLT4. Interacts with ZFYVE9; ZFYVE9 recruits SMAD2 and SMAD3 to the TGF-beta receptor. Interacts with and is activated by SCUBE3; this interaction does not affect TGFB1-binding to TGFBR2. Interacts with VPS39; this interaction is independent of the receptor kinase activity and of the presence of TGF-beta. Interacts with CLU. Requires Mg(2+) as cofactor. Mn(2+) serves as cofactor. Post-translationally, phosphorylated on a Ser/Thr residue in the cytoplasmic domain. Widely expressed in adult. Expressed primarily in mesenchyme and epidermis of the midgestational fetus.

It is found in the cell membrane. It localises to the membrane raft. The catalysed reaction is L-threonyl-[receptor-protein] + ATP = O-phospho-L-threonyl-[receptor-protein] + ADP + H(+). It carries out the reaction L-seryl-[receptor-protein] + ATP = O-phospho-L-seryl-[receptor-protein] + ADP + H(+). Transmembrane serine/threonine kinase forming with the TGF-beta type I serine/threonine kinase receptor, TGFBR1, the non-promiscuous receptor for the TGF-beta cytokines TGFB1, TGFB2 and TGFB3. Transduces the TGFB1, TGFB2 and TGFB3 signal from the cell surface to the cytoplasm and is thus regulating a plethora of physiological and pathological processes including cell cycle arrest in epithelial and hematopoietic cells, control of mesenchymal cell proliferation and differentiation, wound healing, extracellular matrix production, immunosuppression and carcinogenesis. The formation of the receptor complex composed of 2 TGFBR1 and 2 TGFBR2 molecules symmetrically bound to the cytokine dimer results in the phosphorylation and the activation of TGFRB1 by the constitutively active TGFBR2. Activated TGFBR1 phosphorylates SMAD2 which dissociates from the receptor and interacts with SMAD4. The SMAD2-SMAD4 complex is subsequently translocated to the nucleus where it modulates the transcription of the TGF-beta-regulated genes. This constitutes the canonical SMAD-dependent TGF-beta signaling cascade. Also involved in non-canonical, SMAD-independent TGF-beta signaling pathways. In terms of biological role, has transforming growth factor beta-activated receptor activity. This Mus musculus (Mouse) protein is TGF-beta receptor type-2 (Tgfbr2).